The primary structure comprises 276 residues: Glutamate racemase (276 aa).

Substrate is bound by residues Asp-10–Ser-11 and Tyr-42–Gly-43. Catalysis depends on Cys-74, which acts as the Proton donor/acceptor. Asn-75–Thr-76 contributes to the substrate binding site. Residue Cys-185 is the Proton donor/acceptor of the active site. Position 186-187 (Thr-186–His-187) interacts with substrate.

It belongs to the aspartate/glutamate racemases family.

It catalyses the reaction L-glutamate = D-glutamate. Its pathway is cell wall biogenesis; peptidoglycan biosynthesis. Its function is as follows. Provides the (R)-glutamate required for cell wall biosynthesis. The polypeptide is Glutamate racemase (Levilactobacillus brevis (strain ATCC 367 / BCRC 12310 / CIP 105137 / JCM 1170 / LMG 11437 / NCIMB 947 / NCTC 947) (Lactobacillus brevis)).